Reading from the N-terminus, the 1400-residue chain is DNA-directed RNA polymerase subunit beta' (1400 aa).

Residues C71, C73, C86, and C89 each coordinate Zn(2+). Mg(2+)-binding residues include D462, D464, and D466. Residues C810, C884, C891, and C894 each coordinate Zn(2+). Residues 1377–1400 (REKQATIVPPAAPEAEPLALPPVE) are disordered.

Belongs to the RNA polymerase beta' chain family. In terms of assembly, the RNAP catalytic core consists of 2 alpha, 1 beta, 1 beta' and 1 omega subunit. When a sigma factor is associated with the core the holoenzyme is formed, which can initiate transcription. Mg(2+) serves as cofactor. The cofactor is Zn(2+).

It carries out the reaction RNA(n) + a ribonucleoside 5'-triphosphate = RNA(n+1) + diphosphate. In terms of biological role, DNA-dependent RNA polymerase catalyzes the transcription of DNA into RNA using the four ribonucleoside triphosphates as substrates. In Rhodopseudomonas palustris (strain HaA2), this protein is DNA-directed RNA polymerase subunit beta'.